We begin with the raw amino-acid sequence, 191 residues long: Succinoglycan biosynthesis protein ExoI (191 aa).

The interval 1–21 is disordered; that stretch reads MTRIKSAVAAGGRRAPHSARL.

It functions in the pathway glycan metabolism; exopolysaccharide biosynthesis. The polypeptide is Succinoglycan biosynthesis protein ExoI (exoI) (Rhizobium meliloti (strain 1021) (Ensifer meliloti)).